The sequence spans 180 residues: UPF0227 protein YcfP (180 aa).

The protein belongs to the UPF0227 family.

This chain is UPF0227 protein YcfP, found in Salmonella choleraesuis (strain SC-B67).